A 203-amino-acid polypeptide reads, in one-letter code: Outer-membrane lipoprotein carrier protein (203 aa).

An N-terminal signal peptide occupies residues M1–Y20.

Belongs to the LolA family. Monomer.

The protein localises to the periplasm. Functionally, participates in the translocation of lipoproteins from the inner membrane to the outer membrane. Only forms a complex with a lipoprotein if the residue after the N-terminal Cys is not an aspartate (The Asp acts as a targeting signal to indicate that the lipoprotein should stay in the inner membrane). The chain is Outer-membrane lipoprotein carrier protein from Pectobacterium carotovorum subsp. carotovorum (strain PC1).